We begin with the raw amino-acid sequence, 725 residues long: Methionine--tRNA ligase (725 aa).

Residues 27–37 (PYANGQIHIGH) carry the 'HIGH' region motif. Zn(2+)-binding residues include cysteine 158, cysteine 161, cysteine 171, and cysteine 174. Positions 348–352 (KMSKS) match the 'KMSKS' region motif. Residue lysine 351 participates in ATP binding. The 107-residue stretch at 619-725 (DFAKIDLRIA…SGAKPGMRVK (107 aa)) folds into the tRNA-binding domain.

Belongs to the class-I aminoacyl-tRNA synthetase family. MetG type 1 subfamily. As to quaternary structure, homodimer. Requires Zn(2+) as cofactor.

It is found in the cytoplasm. It catalyses the reaction tRNA(Met) + L-methionine + ATP = L-methionyl-tRNA(Met) + AMP + diphosphate. In terms of biological role, is required not only for elongation of protein synthesis but also for the initiation of all mRNA translation through initiator tRNA(fMet) aminoacylation. This is Methionine--tRNA ligase from Burkholderia pseudomallei (strain 668).